Consider the following 670-residue polypeptide: DNA ligase (670 aa).

NAD(+)-binding positions include 32–36 (DAEYD), 81–82 (SL), and Glu113. The N6-AMP-lysine intermediate role is filled by Lys115. 4 residues coordinate NAD(+): Arg136, Glu173, Lys290, and Lys314. Zn(2+) is bound by residues Cys408, Cys411, Cys426, and Cys432. Positions 592 to 670 (EIDSPFAGKT…EAEMIRLLGE (79 aa)) constitute a BRCT domain.

It belongs to the NAD-dependent DNA ligase family. LigA subfamily. Mg(2+) is required as a cofactor. Requires Mn(2+) as cofactor.

The catalysed reaction is NAD(+) + (deoxyribonucleotide)n-3'-hydroxyl + 5'-phospho-(deoxyribonucleotide)m = (deoxyribonucleotide)n+m + AMP + beta-nicotinamide D-nucleotide.. Its function is as follows. DNA ligase that catalyzes the formation of phosphodiester linkages between 5'-phosphoryl and 3'-hydroxyl groups in double-stranded DNA using NAD as a coenzyme and as the energy source for the reaction. It is essential for DNA replication and repair of damaged DNA. This chain is DNA ligase, found in Yersinia pseudotuberculosis serotype O:1b (strain IP 31758).